The chain runs to 406 residues: Argininosuccinate synthase (406 aa).

ATP is bound by residues 12–20 (AYSGGLDTS) and A40. L-citrulline contacts are provided by Y92 and S97. G122 contributes to the ATP binding site. L-aspartate-binding residues include T124, N128, and D129. N128 contacts L-citrulline. Residues R132, S181, S190, E266, and Y278 each coordinate L-citrulline.

This sequence belongs to the argininosuccinate synthase family. Type 1 subfamily. Homotetramer.

The protein localises to the cytoplasm. The enzyme catalyses L-citrulline + L-aspartate + ATP = 2-(N(omega)-L-arginino)succinate + AMP + diphosphate + H(+). Its pathway is amino-acid biosynthesis; L-arginine biosynthesis; L-arginine from L-ornithine and carbamoyl phosphate: step 2/3. This is Argininosuccinate synthase from Serratia proteamaculans (strain 568).